Reading from the N-terminus, the 309-residue chain is NAD kinase (309 aa).

Residue Asp89 is the Proton acceptor of the active site. NAD(+)-binding positions include 89–90 (DG), 163–164 (NE), His174, Arg191, Asp193, and 204–209 (TAYSLS).

Belongs to the NAD kinase family. A divalent metal cation is required as a cofactor.

It localises to the cytoplasm. It catalyses the reaction NAD(+) + ATP = ADP + NADP(+) + H(+). Functionally, involved in the regulation of the intracellular balance of NAD and NADP, and is a key enzyme in the biosynthesis of NADP. Catalyzes specifically the phosphorylation on 2'-hydroxyl of the adenosine moiety of NAD to yield NADP. The sequence is that of NAD kinase from Shewanella frigidimarina (strain NCIMB 400).